A 159-amino-acid chain; its full sequence is Phosphopantetheine adenylyltransferase (159 aa).

Threonine 10 provides a ligand contact to substrate. ATP-binding positions include 10 to 11 (TF) and histidine 18. Positions 42, 74, and 88 each coordinate substrate. ATP is bound by residues 89–91 (GLR), glutamate 99, and 124–130 (WSFISSS).

Belongs to the bacterial CoaD family. Homohexamer. The cofactor is Mg(2+).

It is found in the cytoplasm. It carries out the reaction (R)-4'-phosphopantetheine + ATP + H(+) = 3'-dephospho-CoA + diphosphate. The protein operates within cofactor biosynthesis; coenzyme A biosynthesis; CoA from (R)-pantothenate: step 4/5. Functionally, reversibly transfers an adenylyl group from ATP to 4'-phosphopantetheine, yielding dephospho-CoA (dPCoA) and pyrophosphate. The polypeptide is Phosphopantetheine adenylyltransferase (Klebsiella pneumoniae (strain 342)).